Reading from the N-terminus, the 318-residue chain is MAAAASNGNGMEVDVAALPSVMAQGVTGSVTVALHPLVILNISDHWIRMRSQEGRPMQVIGALIGKQEGRNIEVMNSFELLSQINDEKITINKEYYYTKEEQFKQVFKDMEFLGWYTTGGTPDPSDIHVHKQVCEIIESPLFLKLNPMTKHTDLPVSVYESVIDIVNGEATMLLAELSYTLATEEAERIGVDHVARMTATGSGENSTVAEHLIAQHSAIKMLHSRVRLILEYVRAAEGGEVPFNHEILREASALCHCLPVLSTDKFKTDFYDQCNDVGLMSYLGTITKTCNTMNQFVNKFNILYDRQGIGRRMRGLFF.

Residues 32-165 (VALHPLVILN…VSVYESVIDI (134 aa)) enclose the MPN domain.

This sequence belongs to the peptidase M67A family. CSN6 subfamily. In terms of assembly, component of the CSN complex, probably composed of cops1, cops2, cops3, cops4, cops5, cops6, cops7, cops8 and cops9.

The protein localises to the cytoplasm. It localises to the nucleus. Its function is as follows. Component of the COP9 signalosome complex (CSN), a complex involved in various cellular and developmental processes. The CSN complex is an essential regulator of the ubiquitin (Ubl) conjugation pathway by mediating the deneddylation of the cullin subunits of E3 ligase complexes, leading to modify the Ubl ligase activity. The protein is COP9 signalosome complex subunit 6 (cops6) of Xenopus laevis (African clawed frog).